The following is a 214-amino-acid chain: SH3 domain-binding glutamic acid-rich protein (214 aa).

The short motif at 61–67 is the SH3-binding element; it reads NGIPLPP. The disordered stretch occupies residues 101-214; sequence PGSKVTKSEE…EEEAGEGEDS (114 aa). The segment covering 129–144 has biased composition (basic and acidic residues); the sequence is GTEKAEKSGENEAQKE. Acidic residues-rich tracts occupy residues 162 to 192 and 198 to 214; these read EGEDGEEGEEGEEREEGGEGETTGETEEAPE and EAEEEEPEEEAGEGEDS.

This sequence belongs to the SH3BGR family.

This Mus musculus (Mouse) protein is SH3 domain-binding glutamic acid-rich protein (Sh3bgr).